The sequence spans 151 residues: Transcriptional regulator MraZ (151 aa).

SpoVT-AbrB domains follow at residues 5–51 (AHEL…PVAE) and 81–124 (AEIL…GREQ).

The protein belongs to the MraZ family. In terms of assembly, forms oligomers.

The protein resides in the cytoplasm. It is found in the nucleoid. This Neisseria meningitidis serogroup A / serotype 4A (strain DSM 15465 / Z2491) protein is Transcriptional regulator MraZ.